The primary structure comprises 246 residues: MKIKSFLGKSLTLVVLGVFLFSGWKIGMELYENKHNQTILDDAKAVYTKDAATTNVNGEVRDELRDLQKLNKDMVGWLTIIDTEIDYPILQSKDNDYYLHHNYKNEKARAGSIFKDYRNTNEFLDKNTIIYGHNMKDGSMFADLRKYLDKDFLVAHPTFSYESGLTNYEVEIFAVYETTTDFYYIETEFPETTDFEDYLQKVKQQSVYTSNVKVSGKDRIITLSTCDTEKDYEKGRMVIQGKLVTK.

Residues 5–24 (SFLGKSLTLVVLGVFLFSGW) form a helical membrane-spanning segment.

Belongs to the bacterial sortase family. Class B subfamily.

The protein localises to the cell membrane. In terms of biological role, transpeptidase that anchors surface proteins to the cell wall. Recognizes and modifies its substrate by proteolytic cleavage of a C-terminal sorting signal. Following cleavage, a covalent intermediate is formed via a thioester bond between the sortase and its substrate, which is then transferred and covalently attached to the cell wall. Catalyzes a cell wall sorting reaction in which a surface protein with the consensus sorting signal NP(Q/K)(T/S)(N/G/S)(D/A) is cleaved between the fourth and fifth residues, and the fourth position is linked to the cell wall. This is not the major sortase in Listeria, it seems to anchor only 2 proteins, Hbp2 (SvpA) and Hbp1. This chain is Sortase B, found in Listeria monocytogenes serovar 1/2a (strain ATCC BAA-679 / EGD-e).